The following is a 344-amino-acid chain: L-rhamnose-proton symporter (344 aa).

10 helical membrane passes run 4–24 (AITMGIFWHLIGAASAACFYA), 38–58 (WSVGGIVSWIILPWAISALLL), 68–88 (FSLSTLLPVFLFGAMWGIGNI), 101–121 (MGIGIAIGITLIVGTLMTPII), 137–157 (TLLGVLVALIGVGIVTRAGQL), 175–195 (LVLAVMCGIFSAGMSFAMNAA), 214–234 (LPSYVVIMGGGAIINLGFCFI), 259–279 (VLLSVLGGLMWYLQFFFYAWG), 290–310 (ISWMLHMSFYVLCGGIVGLVL), and 323–343 (VLSLGCVVIIVAANIVGIGMA).

This sequence belongs to the L-rhamnose transporter (TC 2.A.7.6) family.

The protein localises to the cell inner membrane. The enzyme catalyses L-rhamnopyranose(in) + H(+)(in) = L-rhamnopyranose(out) + H(+)(out). Its function is as follows. Uptake of L-rhamnose across the cytoplasmic membrane with the concomitant transport of protons into the cell (symport system). This chain is L-rhamnose-proton symporter, found in Escherichia coli O1:K1 / APEC.